The sequence spans 317 residues: Protoheme IX farnesyltransferase (317 aa).

9 consecutive transmembrane segments (helical) span residues 43–63 (PISV…AGAT), 65–85 (PVSG…CAGA), 119–139 (ALYW…NLNP), 140–160 (IAWI…SLWL), 168–188 (IVIG…AVTG), 195–215 (VLIA…LAIF), 238–258 (LNWL…IYFV), 261–281 (WGLV…ALSV), and 292–312 (AWVL…SMMV).

The protein belongs to the UbiA prenyltransferase family. Protoheme IX farnesyltransferase subfamily. In terms of assembly, interacts with CtaA.

The protein resides in the cell membrane. The enzyme catalyses heme b + (2E,6E)-farnesyl diphosphate + H2O = Fe(II)-heme o + diphosphate. Its pathway is porphyrin-containing compound metabolism; heme O biosynthesis; heme O from protoheme: step 1/1. Its function is as follows. Converts heme B (protoheme IX) to heme O by substitution of the vinyl group on carbon 2 of heme B porphyrin ring with a hydroxyethyl farnesyl side group. The sequence is that of Protoheme IX farnesyltransferase from Desulforudis audaxviator (strain MP104C).